Consider the following 372-residue polypeptide: MQTISGVLPTVLSPSELRSDDERTFQFDEEAEITTHLTESEDLRRLINETAQLGVRVDHIHDKTDQEIARLEKVIKEVTESDTFFRSCSGWFKTNKNFSDSESSSNTQLKSLSQLHGRYDRDWRQRLNKWFRKNKSKLALPSDNNLEEVNDDKVYGYGEDLMERGKTPYFSDIDDFMNGLNIISPLTPDDFENDDTLVKIDETCQIHSASEPEKTSISPTFGKNIKKELVTDDTESIISGPPLQENKKTLLKYRYVRTSLDMLGSEKSSSKNNSGGMFRIFHKSANFGDKNQENVPRVWDTLRNNLGREIYLLQGRFKKWTTKHQNLKKGQPCKDEDAVTVPLPSSDPGKETQLETKLCFVPEPGDQPLVQA.

Positions 328–353 (KKGQPCKDEDAVTVPLPSSDPGKETQ) are disordered.

Its function is as follows. Induces the SOS system when expressed in E.coli, therefore, it may play a role in DNA metabolism and/or in genome stability. This is an uncharacterized protein from Saccharomyces cerevisiae (strain ATCC 204508 / S288c) (Baker's yeast).